The sequence spans 250 residues: GTP cyclohydrolase 1 (250 aa).

2 stretches are compositionally biased toward basic and acidic residues: residues 1-14 (MEKG…EKPR) and 35-44 (PAEKPPRPEA). A disordered region spans residues 1-64 (MEKGPVRAPA…GERPRSEEDN (64 aa)). Residues Ser60 and Ser81 each carry the phosphoserine modification. 3 residues coordinate Zn(2+): Cys141, His144, and Cys212.

The protein belongs to the GTP cyclohydrolase I family. Toroid-shaped homodecamer, composed of a dimer of pentamers. The inactive isoforms also form decamers and may possibly be incorporated into GCH1 heterodecamers, decreasing enzyme stability and activity. Interacts with AHSA1 and GCHFR/GFRP. Phosphorylated by casein kinase II at Ser-81 in HAECs during oscillatory shear stress; phosphorylation at Ser-81 results in increased enzyme activity. In epidermis, expressed predominantly in basal undifferentiated keratinocytes and in some but not all melanocytes (at protein level).

The protein resides in the cytoplasm. It localises to the nucleus. It carries out the reaction GTP + H2O = 7,8-dihydroneopterin 3'-triphosphate + formate + H(+). Its pathway is cofactor biosynthesis; 7,8-dihydroneopterin triphosphate biosynthesis; 7,8-dihydroneopterin triphosphate from GTP: step 1/1. GTP shows a positive allosteric effect, and tetrahydrobiopterin inhibits the enzyme activity. Zinc is required for catalytic activity. Inhibited by Mg(2+). Positively regulates nitric oxide synthesis in umbilical vein endothelial cells (HUVECs). May be involved in dopamine synthesis. May modify pain sensitivity and persistence. Isoform GCH-1 is the functional enzyme, the potential function of the enzymatically inactive isoforms remains unknown. The sequence is that of GTP cyclohydrolase 1 (GCH1) from Homo sapiens (Human).